The following is a 76-amino-acid chain: DNA-directed RNA polymerase subunit omega (76 aa).

Belongs to the RNA polymerase subunit omega family. As to quaternary structure, the RNAP catalytic core consists of 2 alpha, 1 beta, 1 beta' and 1 omega subunit. When a sigma factor is associated with the core the holoenzyme is formed, which can initiate transcription.

It catalyses the reaction RNA(n) + a ribonucleoside 5'-triphosphate = RNA(n+1) + diphosphate. Promotes RNA polymerase assembly. Latches the N- and C-terminal regions of the beta' subunit thereby facilitating its interaction with the beta and alpha subunits. This is DNA-directed RNA polymerase subunit omega (rpoZ) from Aquifex aeolicus (strain VF5).